The sequence spans 129 residues: NADPH-dependent 7-cyano-7-deazaguanine reductase (129 aa).

The Thioimide intermediate role is filled by Cys43. Catalysis depends on Asp50, which acts as the Proton donor. Residues 65 to 67 (VEL) and 84 to 85 (HE) contribute to the substrate site.

Belongs to the GTP cyclohydrolase I family. QueF type 1 subfamily.

Its subcellular location is the cytoplasm. It carries out the reaction 7-aminomethyl-7-carbaguanine + 2 NADP(+) = 7-cyano-7-deazaguanine + 2 NADPH + 3 H(+). The protein operates within tRNA modification; tRNA-queuosine biosynthesis. Catalyzes the NADPH-dependent reduction of 7-cyano-7-deazaguanine (preQ0) to 7-aminomethyl-7-deazaguanine (preQ1). This is NADPH-dependent 7-cyano-7-deazaguanine reductase from Aquifex aeolicus (strain VF5).